We begin with the raw amino-acid sequence, 75 residues long: Small ribosomal subunit protein bS18 (75 aa).

Belongs to the bacterial ribosomal protein bS18 family. In terms of assembly, part of the 30S ribosomal subunit. Forms a tight heterodimer with protein bS6.

Binds as a heterodimer with protein bS6 to the central domain of the 16S rRNA, where it helps stabilize the platform of the 30S subunit. The protein is Small ribosomal subunit protein bS18 of Psychrobacter sp. (strain PRwf-1).